The following is a 154-amino-acid chain: UPF0178 protein Sala_2376 (154 aa).

The protein belongs to the UPF0178 family.

In Sphingopyxis alaskensis (strain DSM 13593 / LMG 18877 / RB2256) (Sphingomonas alaskensis), this protein is UPF0178 protein Sala_2376.